We begin with the raw amino-acid sequence, 237 residues long: Purine nucleoside phosphorylase DeoD-type (237 aa).

Histidine 4 lines the a purine D-ribonucleoside pocket. Phosphate is bound by residues glycine 20, arginine 24, arginine 43, and 87-90; that span reads RVGT. A purine D-ribonucleoside is bound by residues 180-182 and 204-205; these read EME and SD. Residue aspartate 205 is the Proton donor of the active site.

This sequence belongs to the PNP/UDP phosphorylase family. As to quaternary structure, homohexamer; trimer of homodimers.

The enzyme catalyses a purine D-ribonucleoside + phosphate = a purine nucleobase + alpha-D-ribose 1-phosphate. It carries out the reaction a purine 2'-deoxy-D-ribonucleoside + phosphate = a purine nucleobase + 2-deoxy-alpha-D-ribose 1-phosphate. Functionally, catalyzes the reversible phosphorolytic breakdown of the N-glycosidic bond in the beta-(deoxy)ribonucleoside molecules, with the formation of the corresponding free purine bases and pentose-1-phosphate. The chain is Purine nucleoside phosphorylase DeoD-type from Streptococcus suis (strain 98HAH33).